A 177-amino-acid chain; its full sequence is UPF0316 protein STH2077 (177 aa).

The next 2 helical transmembrane spans lie at alanine 9 to valine 29 and leucine 41 to valine 61.

Belongs to the UPF0316 family.

The protein localises to the cell membrane. The polypeptide is UPF0316 protein STH2077 (Symbiobacterium thermophilum (strain DSM 24528 / JCM 14929 / IAM 14863 / T)).